The sequence spans 707 residues: Lipase maturation factor 2 (707 aa).

The next 10 helical transmembrane spans lie at 10–30 (LFLQ…YTQI), 78–98 (LELL…LSPL), 102–122 (VIYL…QVFL), 123–143 (YFQW…VAPL), 165–185 (DLPF…SGVV), 227–247 (LSVV…FAPI), 259–279 (VLLQ…LMTL), 310–330 (ALLA…LAYG), 364–384 (LTLP…LSAL), and 399–419 (AVVQ…ISLV). 2 N-linked (GlcNAc...) asparagine glycosylation sites follow: Asn489 and Asn616. Residues 637-657 (ALLWGLLMAVGAVRFVQALLA) traverse the membrane as a helical segment. A disordered region spans residues 665–707 (PLAPVSGEKRRPASQKDSGAASEQATAAPNPCSSSSRTTRRKK). The segment covering 679 to 691 (QKDSGAASEQATA) has biased composition (polar residues).

Belongs to the lipase maturation factor family.

It is found in the endoplasmic reticulum membrane. Its function is as follows. Involved in the maturation of specific proteins in the endoplasmic reticulum. May be required for maturation and transport of active lipoprotein lipase (LPL) through the secretory pathway. In Homo sapiens (Human), this protein is Lipase maturation factor 2 (LMF2).